The primary structure comprises 449 residues: MSHITFDYSKVLESFAGQHEIDFLQGQVTEADKLLREGTGPGSDFLGWLDLPENYDKEEFARILTAAEKIKSDSEVLVVIGIGGSYLGAKAAIDFLNHHFANLQTAKERKAPQILYAGNSISSTYLADLVEYVQDKEFSVNVISKSGTTTEPAIAFRVFKELLVKKYGQEEANKRIYATTDKVKGAVKVEADANNWETFVVPDNVGGRFSVLTAVGLLPIAASGADITALMEGANAARKDLSSDKISENIAYQYAAVRNVLYRKGYITEILANYEPSLQYFGEWWKQLAGESEGKDQKGIYPTSANFSTDLHSLGQFIQEGYRNLFETVIRVDKPRKNVIIPELAEDLDGLGYLQGKDVDFVNKKATDGVLLAHTDGGVPNMFVTLPAQDEFTLGYTIYFFELAIAVSGYMNAVNPFDQPGVEAYKRNMFALLGKPGFEALSAELNARL.

The Proton donor role is filled by Glu291. Catalysis depends on residues His312 and Lys426.

It belongs to the GPI family.

It localises to the cytoplasm. The catalysed reaction is alpha-D-glucose 6-phosphate = beta-D-fructose 6-phosphate. It participates in carbohydrate biosynthesis; gluconeogenesis. The protein operates within carbohydrate degradation; glycolysis; D-glyceraldehyde 3-phosphate and glycerone phosphate from D-glucose: step 2/4. Functionally, catalyzes the reversible isomerization of glucose-6-phosphate to fructose-6-phosphate. The protein is Glucose-6-phosphate isomerase of Streptococcus pyogenes serotype M12 (strain MGAS2096).